Reading from the N-terminus, the 267-residue chain is Phosphatidylglycerol--prolipoprotein diacylglyceryl transferase (267 aa).

3 helical membrane-spanning segments follow: residues 18–38, 57–77, and 95–115; these read LSVR…MWFA, FLFY…VLFY, and GGMS…IFAW. Arg-140 is an a 1,2-diacyl-sn-glycero-3-phospho-(1'-sn-glycerol) binding site. 3 helical membrane-spanning segments follow: residues 173–193, 200–220, and 233–253; these read SQLY…QWFI, GSVA…IEYF, and FISM…GLLI.

The protein belongs to the Lgt family.

It is found in the cell inner membrane. It carries out the reaction L-cysteinyl-[prolipoprotein] + a 1,2-diacyl-sn-glycero-3-phospho-(1'-sn-glycerol) = an S-1,2-diacyl-sn-glyceryl-L-cysteinyl-[prolipoprotein] + sn-glycerol 1-phosphate + H(+). Its pathway is protein modification; lipoprotein biosynthesis (diacylglyceryl transfer). In terms of biological role, catalyzes the transfer of the diacylglyceryl group from phosphatidylglycerol to the sulfhydryl group of the N-terminal cysteine of a prolipoprotein, the first step in the formation of mature lipoproteins. This chain is Phosphatidylglycerol--prolipoprotein diacylglyceryl transferase, found in Pseudoalteromonas translucida (strain TAC 125).